We begin with the raw amino-acid sequence, 218 residues long: Ras-related protein Rab-11B (218 aa).

Gly2 carries the N-acetylglycine modification. Residues Ser20, Gly21, Gly23, Lys24, Ser25, Asn26, Asn37, Leu38, Ser40, Ser42, and Thr43 each contribute to the GTP site. Position 25 (Ser25) interacts with Mg(2+). The Switch 1 signature appears at 36–47 (FNLESKSTIGVE). Mg(2+) contacts are provided by Thr43 and Asp66. Positions 67 to 86 (TAGQERYRAITSAYYRGAVG) match the Switch 2 motif. 6 residues coordinate GTP: Gly69, Asn124, Lys125, Asp127, Ala155, and Leu156. The tract at residues 183 to 218 (DRSAHDESPGNNVVDISVPPTTDGQKSNKLQCCQNM) is disordered. The span at 201–218 (PPTTDGQKSNKLQCCQNM) shows a compositional bias: polar residues. Residues Cys214 and Cys215 are each lipidated (S-geranylgeranyl cysteine). Cys215 bears the Cysteine methyl ester mark. A propeptide spans 216–218 (QNM) (removed in mature form).

This sequence belongs to the small GTPase superfamily. Rab family. Requires Mg(2+) as cofactor.

It is found in the recycling endosome membrane. The protein resides in the cytoplasmic vesicle. It localises to the secretory vesicle. The protein localises to the synaptic vesicle membrane. Its subcellular location is the phagosome membrane. The enzyme catalyses GTP + H2O = GDP + phosphate + H(+). Regulated by guanine nucleotide exchange factors (GEFs) which promote the exchange of bound GDP for free GTP. Regulated by GTPase activating proteins (GAPs) which increase the GTP hydrolysis activity. Inhibited by GDP dissociation inhibitors (GDIs) which prevent Rab-GDP dissociation. In terms of biological role, the small GTPases Rab are key regulators of intracellular membrane trafficking, from the formation of transport vesicles to their fusion with membranes. Rabs cycle between an inactive GDP-bound form and an active GTP-bound form that is able to recruit to membranes different set of downstream effectors directly responsible for vesicle formation, movement, tethering and fusion. That Rab plays a role in endocytic recycling, regulating apical recycling of several transmembrane proteins including cystic fibrosis transmembrane conductance regulator/CFTR, epithelial sodium channel/ENaC, potassium voltage-gated channel, and voltage-dependent L-type calcium channel. May also regulate constitutive and regulated secretion, like insulin granule exocytosis. Required for melanosome transport and release from melanocytes. Also regulates V-ATPase intracellular transport in response to extracellular acidosis. The polypeptide is Ras-related protein Rab-11B (Diplobatis ommata (Ocellated electric ray)).